The following is a 215-amino-acid chain: Ribosomal RNA small subunit methyltransferase G (215 aa).

Residues Gly78, Leu83, Ala128 to Glu129, and Arg146 each bind S-adenosyl-L-methionine.

The protein belongs to the methyltransferase superfamily. RNA methyltransferase RsmG family.

Its subcellular location is the cytoplasm. It carries out the reaction guanosine(527) in 16S rRNA + S-adenosyl-L-methionine = N(7)-methylguanosine(527) in 16S rRNA + S-adenosyl-L-homocysteine. Functionally, specifically methylates the N7 position of guanine in position 527 of 16S rRNA. The protein is Ribosomal RNA small subunit methyltransferase G of Anaeromyxobacter sp. (strain Fw109-5).